Reading from the N-terminus, the 246-residue chain is Probable chemoreceptor glutamine deamidase CheD (246 aa).

Positions 225-246 are disordered; that stretch reads GAGVQPAVQKAASPYAANLSRK.

It belongs to the CheD family.

The enzyme catalyses L-glutaminyl-[protein] + H2O = L-glutamyl-[protein] + NH4(+). Probably deamidates glutamine residues to glutamate on methyl-accepting chemotaxis receptors (MCPs), playing an important role in chemotaxis. This Burkholderia vietnamiensis (strain G4 / LMG 22486) (Burkholderia cepacia (strain R1808)) protein is Probable chemoreceptor glutamine deamidase CheD.